Here is a 185-residue protein sequence, read N- to C-terminus: RING-H2 finger protein ATL8 (185 aa).

A helical transmembrane segment spans residues 28–48 (LVLILAVLLCALTCIIGLIAV). An RING-type; atypical zinc finger spans residues 104 to 146 (CAICLTEFAAGDELRVLPQCGHGFHVSCIDTWLGSHSSCPSCR). A disordered region spans residues 161–185 (PGSSSSGPEPDTRIKQREDGPDNLP). Over residues 170-185 (PDTRIKQREDGPDNLP) the composition is skewed to basic and acidic residues.

The protein belongs to the RING-type zinc finger family. ATL subfamily.

The protein localises to the membrane. The catalysed reaction is S-ubiquitinyl-[E2 ubiquitin-conjugating enzyme]-L-cysteine + [acceptor protein]-L-lysine = [E2 ubiquitin-conjugating enzyme]-L-cysteine + N(6)-ubiquitinyl-[acceptor protein]-L-lysine.. It functions in the pathway protein modification; protein ubiquitination. The polypeptide is RING-H2 finger protein ATL8 (ATL8) (Arabidopsis thaliana (Mouse-ear cress)).